The primary structure comprises 696 residues: SLIT and NTRK-like protein 1 (696 aa).

A signal peptide spans 1–17 (MLLWILLLETSLCFAAG). The region spanning 18-57 (NVTGDVCKEKICSCNEIEGDLHVDCEKKGFTSLQRFTAPT) is the LRRNT 1 domain. Residues 18–622 (NVTGDVCKEK…SRVSISVLVP (605 aa)) are Extracellular-facing. LRR repeat units follow at residues 59–80 (QFYH…EFAN), 83–104 (NAVS…AFLG), 106–128 (QLVK…TFLG), 131–152 (DLEY…AFQD), 155–176 (KLEV…VFQY), and 178–199 (PITH…EVLE). One can recognise an LRRCT 1 domain in the interval 212 to 263 (NPWDCTCDLLSLKEWLENIPKNALIGRVVCEAPTRLQGKDLNETTEQDLCPL). The interval 265 to 314 (NRVDSSLPAPPAQEETFAPGPLPTPFKTNGQEDHATPGSAPNGGTKIPGN) is disordered. Residues 332-373 (NKPLANSLPCPGGCSCDHIPGSGLKMNCNNRNVSSLADLKPK) enclose the LRRNT 2 domain. LRR repeat units lie at residues 376–397 (NVQE…HFVD), 400–421 (NLIL…TFKN), 424–445 (DLRW…KFAG), 448–469 (NLEY…TFNA), 472–493 (KLRI…VFAG), and 495–516 (SLSK…GVLD). An LRRCT 2 domain is found at 529-580 (NPWECSCTIVPFKQWAERLGSEVLMSDLKCETPVNFFRKDFMLLSNDEICPQ). A helical membrane pass occupies residues 623–643 (GLLLVFVTSAFTVVGMLVFIL). Residues 644–696 (RNRKRSKRRDANSSASEINSLQTVCDSSYWHNGPYNADGAHRVYDCGSHSLSD) lie on the Cytoplasmic side of the membrane. The residue at position 695 (Ser-695) is a Phosphoserine; by CK2.

It belongs to the SLITRK family. In terms of assembly, can form homodimers; homodimerization requires repeat LRR 2. Interacts with YWHAB, YWHAE, YWHAG, YWHAH, SFN, YWHAQ and YWHAZ. In terms of processing, undergoes proteolytic cleavage that results in shedding of the ectodomain and cleavage of the C-terminal cytoplasmic tail. Glycosylated. Phosphorylation at Ser-695 is necessary for proper function in promoting neurite outgrowth. As to expression, expressed predominantly in the frontal lobe of the cerebral cortex of the brain. Also expressed in some astrocytic brain tumors such as astrocytomas, oligodendrogliomas, glioblastomas, gangliogliomas and primitive neuroectodermal tumors.

It is found in the membrane. The protein localises to the secreted. It localises to the synapse. Its function is as follows. It is involved in synaptogenesis and promotes excitatory synapse differentiation. Enhances neuronal dendrite outgrowth. This chain is SLIT and NTRK-like protein 1 (SLITRK1), found in Homo sapiens (Human).